The primary structure comprises 269 residues: Protein MGF 360-15R (269 aa).

The protein belongs to the asfivirus MGF 360 family.

Its function is as follows. Plays a role in virus cell tropism, and may be required for efficient virus replication in macrophages. The protein is Protein MGF 360-15R of African swine fever virus (isolate Pig/Kenya/KEN-50/1950) (ASFV).